Here is a 525-residue protein sequence, read N- to C-terminus: EGF domain-specific O-linked N-acetylglucosamine transferase (525 aa).

The N-terminal stretch at 1–24 is a signal peptide; the sequence is MVPLRLVLLLHIIHFSCENEVGSA. Residues 293–295 carry the Required for optimal activity motif; sequence DYE. N-linked (GlcNAc...) asparagine glycosylation occurs at Asn-352. Residues 522–525 carry the Prevents secretion from ER motif; it reads RDEL.

Belongs to the glycosyltransferase 61 family.

Its subcellular location is the endoplasmic reticulum lumen. The catalysed reaction is L-seryl-[protein] + UDP-N-acetyl-alpha-D-glucosamine = 3-O-(N-acetyl-beta-D-glucosaminyl)-L-seryl-[protein] + UDP + H(+). It catalyses the reaction L-threonyl-[protein] + UDP-N-acetyl-alpha-D-glucosamine = 3-O-(N-acetyl-beta-D-glucosaminyl)-L-threonyl-[protein] + UDP + H(+). Functionally, catalyzes the transfer of a single N-acetylglucosamine from UDP-GlcNAc to a serine or threonine residue in extracellular proteins resulting in their modification with a beta-linked N-acetylglucosamine (O-GlcNAc). Specifically glycosylates the Thr residue located between the fifth and sixth conserved cysteines of folded EGF-like domains. The chain is EGF domain-specific O-linked N-acetylglucosamine transferase (eogt) from Xenopus laevis (African clawed frog).